Consider the following 199-residue polypeptide: Small ribosomal subunit protein uS4B (199 aa).

Residues 88–151 (CRLDNLVYRT…RKNKIFIDNF (64 aa)) enclose the S4 RNA-binding domain.

It belongs to the universal ribosomal protein uS4 family. In terms of assembly, part of the 30S ribosomal subunit. Contacts protein S5. The interaction surface between S4 and S5 is involved in control of translational fidelity.

One of the primary rRNA binding proteins, it binds directly to 16S rRNA where it nucleates assembly of the body of the 30S subunit. Its function is as follows. With S5 and S12 plays an important role in translational accuracy. This is Small ribosomal subunit protein uS4B from Alkaliphilus metalliredigens (strain QYMF).